Consider the following 109-residue polypeptide: Nucleoid-associated protein Spea_1509 (109 aa).

The segment at 87–109 (NQKEKMAEVTGGMQLPPGMKMPF) is disordered.

It belongs to the YbaB/EbfC family. Homodimer.

It is found in the cytoplasm. It localises to the nucleoid. Its function is as follows. Binds to DNA and alters its conformation. May be involved in regulation of gene expression, nucleoid organization and DNA protection. This Shewanella pealeana (strain ATCC 700345 / ANG-SQ1) protein is Nucleoid-associated protein Spea_1509.